Consider the following 490-residue polypeptide: Tektin-3 (490 aa).

T7, T9, and T10 each carry an O-linked (GalNAc...) threonine glycan. N41, N86, N103, N111, N276, and N344 each carry an N-linked (GlcNAc...) asparagine glycan. The stretch at 424-451 (VHEVDDTIQTLQQRLRDAEDTLQSLVHI) forms a coiled coil.

This sequence belongs to the tektin family. In terms of assembly, microtubule inner protein component of sperm flagellar doublet microtubules. Interacts with TEKT1, TEKT2, TEKT4 and TEKT5. Interacts with CCDC38. Post-translationally, N- and O-glycosylated. In terms of processing, may be proteolytically processed during the epididymal transit of spermatozoa. Ubiquitinated, leading to its degradation. Deubiquitinated by USP16, promoting its stability. In terms of tissue distribution, expressed in spermatozoa. Expressed in airway epithelial cells.

The protein localises to the cytoplasm. Its subcellular location is the cytoskeleton. The protein resides in the cilium axoneme. It is found in the flagellum axoneme. It localises to the cytoplasmic vesicle. The protein localises to the secretory vesicle. Its subcellular location is the acrosome outer membrane. Microtubule inner protein (MIP) part of the dynein-decorated doublet microtubules (DMTs) in cilia and flagellar axoneme. Forms filamentous polymers in the walls of ciliary and flagellar microtubules. Required for normal sperm mobility. This is Tektin-3 (TEKT3) from Homo sapiens (Human).